A 240-amino-acid chain; its full sequence is Ubiquinone biosynthesis O-methyltransferase (240 aa).

Positions 44, 64, 85, and 129 each coordinate S-adenosyl-L-methionine.

The protein belongs to the methyltransferase superfamily. UbiG/COQ3 family.

The catalysed reaction is a 3-demethylubiquinol + S-adenosyl-L-methionine = a ubiquinol + S-adenosyl-L-homocysteine + H(+). It carries out the reaction a 3-(all-trans-polyprenyl)benzene-1,2-diol + S-adenosyl-L-methionine = a 2-methoxy-6-(all-trans-polyprenyl)phenol + S-adenosyl-L-homocysteine + H(+). Its pathway is cofactor biosynthesis; ubiquinone biosynthesis. Functionally, O-methyltransferase that catalyzes the 2 O-methylation steps in the ubiquinone biosynthetic pathway. The chain is Ubiquinone biosynthesis O-methyltransferase from Escherichia coli O9:H4 (strain HS).